Reading from the N-terminus, the 624-residue chain is DNA mismatch repair protein MutL (624 aa).

Residues 416–436 (LTPSVDQPDTGDGENPVAPEK) are disordered.

Belongs to the DNA mismatch repair MutL/HexB family.

In terms of biological role, this protein is involved in the repair of mismatches in DNA. It is required for dam-dependent methyl-directed DNA mismatch repair. May act as a 'molecular matchmaker', a protein that promotes the formation of a stable complex between two or more DNA-binding proteins in an ATP-dependent manner without itself being part of a final effector complex. This chain is DNA mismatch repair protein MutL, found in Chlorobaculum tepidum (strain ATCC 49652 / DSM 12025 / NBRC 103806 / TLS) (Chlorobium tepidum).